A 306-amino-acid polypeptide reads, in one-letter code: Probable rRNA-processing protein EBP2 (306 aa).

Methionine 1 is modified (N-acetylmethionine). Disordered stretches follow at residues 1–20 (MDTP…LASD), 75–103 (GPVP…DDFQ), and 150–169 (IRQK…KAKQ). Threonine 3 carries the post-translational modification Phosphothreonine. Phosphoserine occurs at positions 7, 9, 11, and 13. Residues 81-90 (SETQPTPQNQ) are compositionally biased toward polar residues. Over residues 91–103 (DQKKGVNPEDDFQ) the composition is skewed to basic and acidic residues. Lysine 93 participates in a covalent cross-link: Glycyl lysine isopeptide (Lys-Gly) (interchain with G-Cter in SUMO2). Residues 135–171 (DYFAEMAKSDQQMQKIRQKLQTKQAAMEKSEKAKQLR) are a coiled coil. Residues lysine 179 and lysine 218 each participate in a glycyl lysine isopeptide (Lys-Gly) (interchain with G-Cter in SUMO2) cross-link. Over residues 213 to 224 (LEGDQKPVERSA) the composition is skewed to basic and acidic residues. Positions 213 to 306 (LEGDQKPVER…ARQKLKSKAR (94 aa)) are disordered. Phosphoserine is present on residues serine 264 and serine 270. The segment covering 274–306 (KVAHGKGSRRPGKKGANKRPGKRARQKLKSKAR) has biased composition (basic residues).

Belongs to the EBP2 family. Interacts with WDR46.

It localises to the nucleus. The protein resides in the nucleolus. Its function is as follows. Required for the processing of the 27S pre-rRNA. In Mus musculus (Mouse), this protein is Probable rRNA-processing protein EBP2 (Ebna1bp2).